A 495-amino-acid polypeptide reads, in one-letter code: GTPase Der (495 aa).

Positions alanine 3 to aspartate 178 constitute an EngA-type G 1 domain. GTP-binding positions include glycine 9–serine 16, aspartate 57–isoleucine 61, and asparagine 130–aspartate 133. Residues threonine 190–proline 227 are disordered. Positions glutamate 213–proline 227 are enriched in acidic residues. In terms of domain architecture, EngA-type G 2 spans leucine 231–serine 404. GTP is bound by residues glycine 237–serine 244, aspartate 284–valine 288, and asparagine 349–aspartate 352. A KH-like domain is found at valine 405 to histidine 489.

The protein belongs to the TRAFAC class TrmE-Era-EngA-EngB-Septin-like GTPase superfamily. EngA (Der) GTPase family. Associates with the 50S ribosomal subunit.

Its function is as follows. GTPase that plays an essential role in the late steps of ribosome biogenesis. This chain is GTPase Der, found in Nitratidesulfovibrio vulgaris (strain DP4) (Desulfovibrio vulgaris).